A 180-amino-acid polypeptide reads, in one-letter code: ATP-dependent protease subunit HslV (180 aa).

The active site involves Thr-7. Na(+)-binding residues include Gly-165, Cys-168, and Thr-171.

It belongs to the peptidase T1B family. HslV subfamily. As to quaternary structure, a double ring-shaped homohexamer of HslV is capped on each side by a ring-shaped HslU homohexamer. The assembly of the HslU/HslV complex is dependent on binding of ATP.

The protein resides in the cytoplasm. The catalysed reaction is ATP-dependent cleavage of peptide bonds with broad specificity.. With respect to regulation, allosterically activated by HslU binding. Its function is as follows. Protease subunit of a proteasome-like degradation complex believed to be a general protein degrading machinery. The polypeptide is ATP-dependent protease subunit HslV (Bacillus cereus (strain G9842)).